Here is a 152-residue protein sequence, read N- to C-terminus: Ribonuclease H (152 aa).

The RNase H type-1 domain maps to Ser4–Ala145. Positions 13, 51, 73, and 137 each coordinate Mg(2+).

It belongs to the RNase H family. Monomer. It depends on Mg(2+) as a cofactor.

It localises to the cytoplasm. It carries out the reaction Endonucleolytic cleavage to 5'-phosphomonoester.. Its function is as follows. Endonuclease that specifically degrades the RNA of RNA-DNA hybrids. This chain is Ribonuclease H, found in Syntrophotalea carbinolica (strain DSM 2380 / NBRC 103641 / GraBd1) (Pelobacter carbinolicus).